The chain runs to 83 residues: U5-theraphotoxin-Hs1d (83 aa).

Residues 1 to 21 (MKTSMFLTLTGLVLLFVVCYA) form the signal peptide. Residues 22–49 (SESEEKEFPKELLSSIFAADSDFKVEER) constitute a propeptide that is removed on maturation. 3 disulfide bridges follow: Cys51/Cys63, Cys56/Cys68, and Cys62/Cys75.

The protein belongs to the neurotoxin 10 (Hwtx-1) family. 51 (Hntx-8) subfamily. Hntx-8 sub-subfamily. As to expression, expressed by the venom gland.

It is found in the secreted. Its function is as follows. Agglutinates erythrocytes. The sequence is that of U5-theraphotoxin-Hs1d from Cyriopagopus schmidti (Chinese bird spider).